We begin with the raw amino-acid sequence, 549 residues long: Glucose-6-phosphate isomerase (549 aa).

Glutamate 354 (proton donor) is an active-site residue. Active-site residues include histidine 385 and lysine 513.

The protein belongs to the GPI family.

It is found in the cytoplasm. The enzyme catalyses alpha-D-glucose 6-phosphate = beta-D-fructose 6-phosphate. The protein operates within carbohydrate biosynthesis; gluconeogenesis. Its pathway is carbohydrate degradation; glycolysis; D-glyceraldehyde 3-phosphate and glycerone phosphate from D-glucose: step 2/4. Functionally, catalyzes the reversible isomerization of glucose-6-phosphate to fructose-6-phosphate. The sequence is that of Glucose-6-phosphate isomerase from Nitrosococcus oceani (strain ATCC 19707 / BCRC 17464 / JCM 30415 / NCIMB 11848 / C-107).